We begin with the raw amino-acid sequence, 669 residues long: NAD-dependent malic enzyme, mitochondrial (669 aa).

The segment covering 33–43 has biased composition (polar residues); it reads IQQSRLYSSNT. The segment at 33-68 is disordered; that stretch reads IQQSRLYSSNTRSHKATTTRENTFQKPYSDEEVTKT. R142 contacts fumarate. Y187 serves as the catalytic Proton donor. The Proton acceptor role is filled by K259. A divalent metal cation is bound by residues E330, D331, and D354. NAD(+)-binding residues include A387 and A390. The (S)-malate site is built by N499 and N539.

It belongs to the malic enzymes family. The cofactor is Mg(2+). Requires Mn(2+) as cofactor.

It localises to the mitochondrion matrix. It catalyses the reaction (S)-malate + NAD(+) = pyruvate + CO2 + NADH. The enzyme catalyses oxaloacetate + H(+) = pyruvate + CO2. Functionally, NAD-dependent mitochondrial malic enzyme that catalyzes the oxidative decarboxylation of malate to pyruvate. This Saccharomyces cerevisiae (strain ATCC 204508 / S288c) (Baker's yeast) protein is NAD-dependent malic enzyme, mitochondrial (MAE1).